The following is a 275-amino-acid chain: Probable ABC transporter permease protein PH1216 (275 aa).

The next 6 helical transmembrane spans lie at 10 to 30, 73 to 93, 105 to 125, 137 to 157, 181 to 203, and 241 to 261; these read LLYI…WSAI, IFTT…GFTI, LLAL…IPLV, ILGL…LLFT, IYTK…YQFT, and IQMA…IALG. Residues 68-260 enclose the ABC transmembrane type-1 domain; it reads ILNSLIFTTF…LPTLLIMIAL (193 aa).

Belongs to the binding-protein-dependent transport system permease family. MalFG subfamily.

Its subcellular location is the cell membrane. Its function is as follows. Probably part of a binding-protein-dependent transport system PH1214/15/16. Probably responsible for the translocation of the substrate across the membrane. The sequence is that of Probable ABC transporter permease protein PH1216 from Pyrococcus horikoshii (strain ATCC 700860 / DSM 12428 / JCM 9974 / NBRC 100139 / OT-3).